Consider the following 252-residue polypeptide: Aspartate/glutamate leucyltransferase (252 aa).

It belongs to the R-transferase family. Bpt subfamily.

The protein resides in the cytoplasm. The enzyme catalyses N-terminal L-glutamyl-[protein] + L-leucyl-tRNA(Leu) = N-terminal L-leucyl-L-glutamyl-[protein] + tRNA(Leu) + H(+). The catalysed reaction is N-terminal L-aspartyl-[protein] + L-leucyl-tRNA(Leu) = N-terminal L-leucyl-L-aspartyl-[protein] + tRNA(Leu) + H(+). Functionally, functions in the N-end rule pathway of protein degradation where it conjugates Leu from its aminoacyl-tRNA to the N-termini of proteins containing an N-terminal aspartate or glutamate. The protein is Aspartate/glutamate leucyltransferase of Afipia carboxidovorans (strain ATCC 49405 / DSM 1227 / KCTC 32145 / OM5) (Oligotropha carboxidovorans).